Reading from the N-terminus, the 314-residue chain is Putative S-adenosyl-L-methionine-dependent methyltransferase MUL_4402 (314 aa).

S-adenosyl-L-methionine contacts are provided by residues D132 and 161–162; that span reads DL. Residues 291 to 314 are disordered; the sequence is RPVPDDAEGPVPPTLFVSAHRPAA.

The protein belongs to the UPF0677 family.

Functionally, exhibits S-adenosyl-L-methionine-dependent methyltransferase activity. This is Putative S-adenosyl-L-methionine-dependent methyltransferase MUL_4402 from Mycobacterium ulcerans (strain Agy99).